Reading from the N-terminus, the 700-residue chain is Polyribonucleotide nucleotidyltransferase (700 aa).

Mg(2+)-binding residues include Asp-484 and Asp-490. The KH domain maps to 551–610 (PRVIRMVVDPEKIREIIGPGGKTISKIIAETGVKIDIEEDGRLYITASDLRSGERAKQMI). Positions 620–688 (GEIYLGKVLR…KLGRISLSRK (69 aa)) constitute an S1 motif domain.

This sequence belongs to the polyribonucleotide nucleotidyltransferase family. Requires Mg(2+) as cofactor.

It is found in the cytoplasm. It catalyses the reaction RNA(n+1) + phosphate = RNA(n) + a ribonucleoside 5'-diphosphate. Its function is as follows. Involved in mRNA degradation. Catalyzes the phosphorolysis of single-stranded polyribonucleotides processively in the 3'- to 5'-direction. In Thermoanaerobacter pseudethanolicus (strain ATCC 33223 / 39E) (Clostridium thermohydrosulfuricum), this protein is Polyribonucleotide nucleotidyltransferase.